Consider the following 370-residue polypeptide: E3 ubiquitin-protein ligase E3D (370 aa).

Ala-2 bears the N-acetylalanine mark. The BRAT1-like motif signature appears at 129–159; that stretch reads PLPSENWSALVGEWCCHPDPFANKPLHPREN. Cys-144 is a Zn(2+) binding site. The tract at residues 214-236 is interaction with UBE2C; it reads QPSEGSFPNIPRSQFVQSVIARC. An HECT-like region spans residues 332-368; it reads LPSTTCLELLLILSRNNASLPLSLRQMNSFQLWCSHC.

As to quaternary structure, interacts with UBE2C/UbcH10 (E2 ubiquitin-conjugating enzyme). In vitro, interacts with cyclin-B. Post-translationally, ubiquitinated by UBCH10 (E2 ubiquitin-conjugating enzyme).

It is found in the cytoplasm. It carries out the reaction S-ubiquitinyl-[E2 ubiquitin-conjugating enzyme]-L-cysteine + [acceptor protein]-L-lysine = [E2 ubiquitin-conjugating enzyme]-L-cysteine + N(6)-ubiquitinyl-[acceptor protein]-L-lysine.. It participates in protein modification; protein ubiquitination. Functionally, E3 ubiquitin-protein ligase which accepts ubiquitin from specific E2 ubiquitin-conjugating enzymes, and transfers it to substrates, generally promoting their degradation by the proteasome. Independently of its E3 ubiquitin-protein ligase activity, acts as an inhibitor of CPSF3 endonuclease activity by blocking CPSF3 active site. The sequence is that of E3 ubiquitin-protein ligase E3D (Ube3d) from Rattus norvegicus (Rat).